Reading from the N-terminus, the 1260-residue chain is ATP-dependent helicase/deoxyribonuclease subunit B (1260 aa).

It belongs to the helicase family. AddB/RexB type 2 subfamily. As to quaternary structure, heterodimer of AddA and RexB. Mg(2+) is required as a cofactor.

In terms of biological role, the heterodimer acts as both an ATP-dependent DNA helicase and an ATP-dependent, dual-direction single-stranded exonuclease. Recognizes the chi site generating a DNA molecule suitable for the initiation of homologous recombination. This subunit has 5' -&gt; 3' nuclease activity but not helicase activity. The polypeptide is ATP-dependent helicase/deoxyribonuclease subunit B (Limosilactobacillus reuteri (strain DSM 20016) (Lactobacillus reuteri)).